The following is a 320-amino-acid chain: NAC domain-containing protein 20 (320 aa).

The region spanning 14-170 (LPPGFRFHPT…DWAVCRIFHK (157 aa)) is the NAC domain. A DNA-binding region spans residues 114–176 (IGMKKTLVFY…IFHKSSGIKK (63 aa)).

In terms of assembly, forms homodimers. Forms heterodimers with NAC26. Expressed in developing seeds.

It is found in the nucleus. The protein localises to the endoplasmic reticulum. Its function is as follows. Transcription factor that acts redundantly with NAC26 to regulate the expression of genes involved in the biosynthesis of starch and storage proteins in grain. Directly binds to the promoters of starch synthase 1 (SS1), pullulanase (PUL), glutelin A1 (GLUA1), glutelins B4 and B5 (GLUB4 and GLUB5), alpha-globulin and 16 kDa prolamin, and activates their expression. Possesses transactivation activity in yeast. This is NAC domain-containing protein 20 from Oryza sativa subsp. indica (Rice).